We begin with the raw amino-acid sequence, 473 residues long: Digalactosyldiacylglycerol synthase 2, chloroplastic (473 aa).

Interaction with the membrane lipid bilayer regions lie at residues 130-148 and 227-245; these read LTWF…YVIG and QPFT…SKGY.

It belongs to the glycosyltransferase group 1 family. Glycosyltransferase 4 subfamily. As to expression, expressed in leaves, flowers and roots, but not in stems and siliques.

The protein resides in the plastid. Its subcellular location is the chloroplast outer membrane. It catalyses the reaction a 1,2-diacyl-3-O-(beta-D-galactosyl)-sn-glycerol + UDP-alpha-D-galactose = a 1,2-diacyl-3-O-[alpha-D-galactosyl-(1-&gt;6)-beta-D-galactosyl]-sn-glycerol + UDP + H(+). Its activity is regulated as follows. Stimulated by anionic phospholipids. Involved in the synthesis of diacylglycerol galactolipids that are specifically found in thylakoid membranes. Specific for alpha-glycosidic linkages. During phosphate shortage, involved in the biosynthesis of digalactosyldiacylglycerol (DGDG) which rescues the limitation of phospholipids. This chain is Digalactosyldiacylglycerol synthase 2, chloroplastic, found in Arabidopsis thaliana (Mouse-ear cress).